A 404-amino-acid polypeptide reads, in one-letter code: Putative glutamate--cysteine ligase 2 (404 aa).

A disordered region spans residues 377–404 (GPAGKRAHEGGRSFRPAAGAPMSIRGQE).

It belongs to the glutamate--cysteine ligase type 2 family. YbdK subfamily.

It carries out the reaction L-cysteine + L-glutamate + ATP = gamma-L-glutamyl-L-cysteine + ADP + phosphate + H(+). In terms of biological role, ATP-dependent carboxylate-amine ligase which exhibits weak glutamate--cysteine ligase activity. This is Putative glutamate--cysteine ligase 2 from Pseudomonas aeruginosa (strain UCBPP-PA14).